Here is an 895-residue protein sequence, read N- to C-terminus: Probable inorganic carbon transporter subunit DabA 1 (895 aa).

Zn(2+)-binding residues include C398, D400, H581, and C596.

This sequence belongs to the inorganic carbon transporter (TC 9.A.2) DabA family. As to quaternary structure, forms a complex with DabB. The cofactor is Zn(2+).

Its subcellular location is the cell inner membrane. Part of an energy-coupled inorganic carbon pump. In Rhodopirellula baltica (strain DSM 10527 / NCIMB 13988 / SH1), this protein is Probable inorganic carbon transporter subunit DabA 1.